The chain runs to 184 residues: Gastrokine-2 (184 aa).

A signal peptide spans 1–20 (MKSLVAFLVVLSILRIQSQA). One can recognise a BRICHOS domain in the interval 54 to 151 (HSGSCSSTTI…LCKHIPLYEG (98 aa)). A disulfide bond links Cys-81 and Cys-143.

As to quaternary structure, heterodimer with TFF1; disulfide linked. Interacts with TFF2.

The protein localises to the secreted. This Rattus norvegicus (Rat) protein is Gastrokine-2 (Gkn2).